A 527-amino-acid polypeptide reads, in one-letter code: DUF21 domain-containing protein At1g47330 (527 aa).

At 1–15 (MSSDIPCCGTTFSLY) the chain is on the extracellular side. The region spanning 8–191 (CGTTFSLYVV…GKGGDLTTDE (184 aa)) is the CNNM transmembrane domain. Residues 16–36 (VVIIIALVAFAGLMAGLTLGL) form a helical membrane-spanning segment. Residues 37-70 (MSLGLVDLEVLIKSGRPQDRINAGKIFPVVKNQH) lie on the Cytoplasmic side of the membrane. A helical transmembrane segment spans residues 71-91 (LLLCTLLIGNSMAMEALPIFL). Residues 92–93 (DK) lie on the Extracellular side of the membrane. The helical transmembrane segment at 94–114 (IVPPWLAILLSVTLILVFGEI) threads the bilayer. Over 115 to 126 (MPQAVCTRYGLK) the chain is Cytoplasmic. A helical membrane pass occupies residues 127-147 (VGAIMAPFVRVLLVLFFPISY). Over 148–527 (PISKVLDWML…PKHEESTQTL (380 aa)) the chain is Extracellular. 3 CBS domains span residues 210-271 (MTPI…EVPL), 274-334 (MSMR…TKDE), and 366-435 (KSEN…ILDE). 3 disordered regions span residues 307–335 (KDLD…KDEL), 358–384 (ETGD…LLAA), and 464–527 (ITQS…TQTL). Position 315 is a phosphoserine (serine 315). A compositionally biased stretch (basic and acidic residues) spans 358–369 (ETGDAKSGKSEN). Positions 464–501 (ITQSSSGSTSPNQTSHMATPDSSPTTKPSNSSPTRKPS) are enriched in low complexity. Residue asparagine 475 is glycosylated (N-linked (GlcNAc...) asparagine). Over residues 502–515 (VSSPTREPSDSSHS) the composition is skewed to polar residues. Basic and acidic residues predominate over residues 518–527 (PKHEESTQTL).

It localises to the membrane. The protein is DUF21 domain-containing protein At1g47330 (CBSDUF7) of Arabidopsis thaliana (Mouse-ear cress).